The primary structure comprises 1023 residues: Sodium/potassium-transporting ATPase subunit alpha-1 (1023 aa).

The propeptide occupies 1 to 5 (MAFKV). A compositionally biased stretch (basic and acidic residues) spans 1 to 11 (MAFKVGRDKYE). Residues 1-38 (MAFKVGRDKYEPAAVSEQGDKKGKKGKKDRDMDELKKE) form a disordered region. The Cytoplasmic segment spans residues 6-87 (GRDKYEPAAV…NALTPPPTTP (82 aa)). At K9 the chain carries N6-acetyllysine. A Phosphotyrosine modification is found at Y10. S16 is modified (phosphoserine; by PKC). K21 carries the post-translational modification N6-acetyllysine. Residues 28-38 (KDRDMDELKKE) are compositionally biased toward basic and acidic residues. 2 positions are modified to phosphoserine: S40 and S47. The phosphoinositide-3 kinase binding stretch occupies residues 82-84 (PPP). The chain crosses the membrane as a helical span at residues 88 to 108 (EWIKFCRQLFGGFSMLLWIGA). Residues 109–131 (ILCFLAYSIQAATEEEPQNDNLY) lie on the Extracellular side of the membrane. Residues 132–152 (LGVVLSAVVIITGCFSYYQEA) traverse the membrane as a helical segment. Over 153 to 288 (KSSKIMESFK…GGQTPIAAEI (136 aa)) the chain is Cytoplasmic. The interval 216–235 (SSLTGESEPQTRSPDFTNEN) is disordered. Position 228 is a phosphoserine (S228). Y260 carries the post-translational modification Phosphotyrosine. A helical membrane pass occupies residues 289 to 308 (EHFIHIITGVAVFLGVSFFI). Residues 309-320 (LSLILEYTWLEA) are Extracellular-facing. Residues 321 to 338 (VIFLIGIIVANVPEGLLA) form a helical membrane-spanning segment. Residues 339-772 (TVTVCLTLTA…EEGRLIFDNL (434 aa)) are Cytoplasmic-facing. Catalysis depends on D376, which acts as the 4-aspartylphosphate intermediate. Phosphoserine occurs at positions 452 and 484. K487 lines the ATP pocket. Y542 is modified (phosphotyrosine). The mediates interaction with SCN7A stretch occupies residues 596–717 (RAAVPDAVGK…QGAIVAVTGD (122 aa)). N6-succinyllysine is present on K661. Residues S668 and S675 each carry the phosphoserine modification. Residues D717 and D721 each coordinate Mg(2+). The helical transmembrane segment at 773–792 (KKSIAYTLTSNIPEITPFLI) threads the bilayer. Residues 793–802 (FIIANIPLPL) lie on the Extracellular side of the membrane. A helical membrane pass occupies residues 803–823 (GTVTILCIDLGTDMVPAISLA). Residues 824–843 (YEQAESDIMKRQPRNPKTDK) lie on the Cytoplasmic side of the membrane. A helical transmembrane segment spans residues 844-866 (LVNERLISTAYGQIGMIQALGGF). Topologically, residues 867-918 (FTYFVILAENGFLPLHLLGLRVDWDDRWINDVEDSYGQQWTYEQRKIVEFTC) are extracellular. A helical membrane pass occupies residues 919-938 (HTAFFVSIVVVQWADLVICK). Residues 939-951 (TRRNSVFQQGMKN) are Cytoplasmic-facing. S943 is subject to Phosphoserine; by PKA. A helical membrane pass occupies residues 952–970 (KILIFGLFEETALAAFLSY). Residues 971 to 985 (CPGMGVALRMYPLKP) are Extracellular-facing. Residues 986–1006 (TWWFCAFPYSLLIFVYDEVRK) traverse the membrane as a helical segment. The Cytoplasmic portion of the chain corresponds to 1007–1023 (LIIRRRPGGWVEKETYY).

It belongs to the cation transport ATPase (P-type) (TC 3.A.3) family. Type IIC subfamily. The sodium/potassium-transporting ATPase is composed of a catalytic alpha subunit, an auxiliary non-catalytic beta subunit and an additional regulatory subunit. Interacts with regulatory subunit FXYD1. Interacts with regulatory subunit FXYD3. Interacts with SIK1. Interacts with SLC35G1 and STIM1. Interacts with CLN3; this interaction regulates the sodium/potassium-transporting ATPase complex localization at the plasma membrane. Interacts with SCN7A; activates ATP1A1 P-type sodium:potassium-exchanging transporter activity which indirectly signals to nearby neurons to regulate sodium homeostasis. In terms of processing, phosphorylation on Tyr-10 modulates pumping activity. Phosphorylation of Ser-943 by PKA modulates the response of ATP1A1 to PKC. Dephosphorylation by protein phosphatase 2A (PP2A) following increases in intracellular sodium, leading to increase catalytic activity.

It localises to the cell membrane. Its subcellular location is the basolateral cell membrane. The protein localises to the sarcolemma. It is found in the cell projection. The protein resides in the axon. It localises to the melanosome. The catalysed reaction is K(+)(out) + Na(+)(in) + ATP + H2O = K(+)(in) + Na(+)(out) + ADP + phosphate + H(+). Its function is as follows. This is the catalytic component of the active enzyme, which catalyzes the hydrolysis of ATP coupled with the exchange of sodium and potassium ions across the plasma membrane. This action creates the electrochemical gradient of sodium and potassium ions, providing the energy for active transport of various nutrients. Could also be part of an osmosensory signaling pathway that senses body-fluid sodium levels and controls salt intake behavior as well as voluntary water intake to regulate sodium homeostasis. This chain is Sodium/potassium-transporting ATPase subunit alpha-1 (ATP1A1), found in Pongo abelii (Sumatran orangutan).